A 328-amino-acid chain; its full sequence is Transcription initiation factor IIB 4 (328 aa).

Basic and acidic residues-rich tracts occupy residues 1 to 12 and 21 to 32; these read MTNQRTTRDGSH and RSRESTDEDHGC. Residues 1–47 are disordered; that stretch reads MTNQRTTRDGSHGTESVPTQRSRESTDEDHGCPECNGDLVTDEDRGE. The TFIIB-type zinc-finger motif lies at 28 to 58; sequence EDHGCPECNGDLVTDEDRGETTCGECGLVVE. Cys-32, Cys-35, Cys-50, and Cys-53 together coordinate Zn(2+). 2 consecutive repeat copies span residues 144-227 and 238-319.

It belongs to the TFIIB family.

In terms of biological role, stabilizes TBP binding to an archaeal box-A promoter. Also responsible for recruiting RNA polymerase II to the pre-initiation complex (DNA-TBP-TFIIB). In Halobacterium salinarum (strain ATCC 700922 / JCM 11081 / NRC-1) (Halobacterium halobium), this protein is Transcription initiation factor IIB 4.